The chain runs to 217 residues: Protein GrpE (217 aa).

Acidic residues-rich tracts occupy residues 1–28 (MSDD…EGDD), 136–152 (DILD…DPGT), and 204–217 (SEAE…DGDE). Disordered regions lie at residues 1–44 (MSDD…NDPA), 135–157 (DDIL…TDPK), and 193–217 (QVTV…DGDE).

The protein belongs to the GrpE family. As to quaternary structure, homodimer.

It localises to the cytoplasm. Functionally, participates actively in the response to hyperosmotic and heat shock by preventing the aggregation of stress-denatured proteins, in association with DnaK and GrpE. It is the nucleotide exchange factor for DnaK and may function as a thermosensor. Unfolded proteins bind initially to DnaJ; upon interaction with the DnaJ-bound protein, DnaK hydrolyzes its bound ATP, resulting in the formation of a stable complex. GrpE releases ADP from DnaK; ATP binding to DnaK triggers the release of the substrate protein, thus completing the reaction cycle. Several rounds of ATP-dependent interactions between DnaJ, DnaK and GrpE are required for fully efficient folding. The chain is Protein GrpE from Natronomonas pharaonis (strain ATCC 35678 / DSM 2160 / CIP 103997 / JCM 8858 / NBRC 14720 / NCIMB 2260 / Gabara) (Halobacterium pharaonis).